Reading from the N-terminus, the 431-residue chain is Adenylosuccinate synthetase (431 aa).

Residues 13–19 (GDEGKGK) and 41–43 (GHT) each bind GTP. Catalysis depends on Asp-14, which acts as the Proton acceptor. The Mg(2+) site is built by Asp-14 and Gly-41. Residues 14 to 17 (DEGK), 39 to 42 (NAGH), Thr-130, Arg-144, Gln-225, Thr-240, and Arg-304 contribute to the IMP site. The Proton donor role is filled by His-42. Position 300–306 (300–306 (AVTGRPR)) interacts with substrate. Residues Arg-306, 332 to 334 (KLD), and 415 to 417 (STG) each bind GTP.

The protein belongs to the adenylosuccinate synthetase family. In terms of assembly, homodimer. The cofactor is Mg(2+).

The protein resides in the cytoplasm. It catalyses the reaction IMP + L-aspartate + GTP = N(6)-(1,2-dicarboxyethyl)-AMP + GDP + phosphate + 2 H(+). It functions in the pathway purine metabolism; AMP biosynthesis via de novo pathway; AMP from IMP: step 1/2. Its function is as follows. Plays an important role in the de novo pathway of purine nucleotide biosynthesis. Catalyzes the first committed step in the biosynthesis of AMP from IMP. This chain is Adenylosuccinate synthetase, found in Legionella pneumophila (strain Paris).